Consider the following 181-residue polypeptide: Oligoribonuclease (181 aa).

An Exonuclease domain is found at leucine 8–leucine 171. Tyrosine 129 is an active-site residue.

The protein belongs to the oligoribonuclease family.

It is found in the cytoplasm. In terms of biological role, 3'-to-5' exoribonuclease specific for small oligoribonucleotides. The sequence is that of Oligoribonuclease from Colwellia psychrerythraea (strain 34H / ATCC BAA-681) (Vibrio psychroerythus).